Here is a 35-residue protein sequence, read N- to C-terminus: Photosystem II reaction center protein T (35 aa).

The chain crosses the membrane as a helical span at residues 3–23; sequence ALVYTFLLIGTLGIIFFAIFF.

The protein belongs to the PsbT family. As to quaternary structure, PSII is composed of 1 copy each of membrane proteins PsbA, PsbB, PsbC, PsbD, PsbE, PsbF, PsbH, PsbI, PsbJ, PsbK, PsbL, PsbM, PsbT, PsbY, PsbZ, Psb30/Ycf12, at least 3 peripheral proteins of the oxygen-evolving complex and a large number of cofactors. It forms dimeric complexes.

The protein localises to the plastid. It localises to the chloroplast thylakoid membrane. Its function is as follows. Found at the monomer-monomer interface of the photosystem II (PS II) dimer, plays a role in assembly and dimerization of PSII. PSII is a light-driven water plastoquinone oxidoreductase, using light energy to abstract electrons from H(2)O, generating a proton gradient subsequently used for ATP formation. This is Photosystem II reaction center protein T from Coleochaete orbicularis (Charophycean green alga).